The sequence spans 103 residues: Large ribosomal subunit protein bL28 (103 aa).

The protein belongs to the bacterial ribosomal protein bL28 family.

The polypeptide is Large ribosomal subunit protein bL28 (Anaplasma phagocytophilum (strain HZ)).